A 195-amino-acid polypeptide reads, in one-letter code: Protein hunchback (195 aa).

Disordered stretches follow at residues 16 to 57 (SHHH…SHTN), 64 to 83 (LKQQ…QQPM), and 155 to 195 (LTPP…KYMA). The segment covering 17–29 (HHHHHHHAHHSHH) has biased composition (basic residues). Low complexity-rich tracts occupy residues 33 to 44 (SNSNSNASSPHQ) and 66 to 81 (QQQQ…QQQQ). The segment covering 176 to 195 (EPEKEHDLMSNSSEDMKYMA) has biased composition (basic and acidic residues).

Belongs to the hunchback C2H2-type zinc-finger protein family.

It localises to the nucleus. Functionally, gap class segmentation protein that controls development of head structures. The polypeptide is Protein hunchback (hb) (Drosophila dasycnemia (Fruit fly)).